The chain runs to 342 residues: Putative TPR repeat-containing protein R856 (342 aa).

TPR repeat units follow at residues 36–69 (VHIF…IFNG), 77–110 (FYSV…IKDM), 119–152 (VYAL…NEKL), 161–194 (AFVL…YREK), 203–236 (AFTI…FNKI), 245–278 (AFSL…YKNV), and 291–324 (ASCL…FEST).

The sequence is that of Putative TPR repeat-containing protein R856 from Acanthamoeba polyphaga mimivirus (APMV).